The chain runs to 446 residues: Xylose isomerase 1 (446 aa).

Active-site residues include histidine 109 and aspartate 112. Glutamate 240, glutamate 276, histidine 279, aspartate 304, aspartate 315, aspartate 317, and aspartate 347 together coordinate Mg(2+).

Belongs to the xylose isomerase family. In terms of assembly, homotetramer. The cofactor is Mg(2+).

The protein localises to the cytoplasm. It catalyses the reaction alpha-D-xylose = alpha-D-xylulofuranose. The polypeptide is Xylose isomerase 1 (Xanthomonas campestris pv. campestris (strain 8004)).